A 279-amino-acid polypeptide reads, in one-letter code: Lacto-N-neotetraose biosynthesis glycosyltransferase LgtB (279 aa).

It belongs to the glycosyltransferase 25 family.

Its pathway is glycan metabolism; lacto-N-neotetraose biosynthesis. It functions in the pathway bacterial outer membrane biogenesis; lipooligosaccharide biosynthesis. Adds the second galactose to the lacto-N-tetraose chain in lipooligosaccharide (LOS). In Neisseria meningitidis serogroup A / serotype 4A (strain DSM 15465 / Z2491), this protein is Lacto-N-neotetraose biosynthesis glycosyltransferase LgtB (lgtB).